The chain runs to 260 residues: Glutamate racemase (260 aa).

Substrate-binding positions include 7-8 and 39-40; these read DS and YG. The Proton donor/acceptor role is filled by Cys71. 72–73 is a substrate binding site; the sequence is NT. Cys182 serves as the catalytic Proton donor/acceptor. Residue 183–184 participates in substrate binding; that stretch reads TH.

This sequence belongs to the aspartate/glutamate racemases family.

The enzyme catalyses L-glutamate = D-glutamate. It participates in cell wall biogenesis; peptidoglycan biosynthesis. Its function is as follows. Provides the (R)-glutamate required for cell wall biosynthesis. This is Glutamate racemase from Sulfurihydrogenibium sp. (strain YO3AOP1).